Reading from the N-terminus, the 287-residue chain is Cyclopropane mycolic acid synthase 1 (287 aa).

S-adenosyl-L-methionine-binding positions include 33–34 (YS), 68–76 (LLDVGCGWG), 94–99 (TLSKNQ), and 123–124 (WE). Residue Cys-269 is part of the active site.

It belongs to the CFA/CMAS family. As to quaternary structure, homodimer.

Its subcellular location is the cytoplasm. The catalysed reaction is a 1-acyl-2-(9Z)-enoyl-sn-glycero-3-phospholipid + S-adenosyl-L-methionine = a 1-acyl-2-(9-cyclopronane)-acyl-sn-glycero-3-phospholipid + S-adenosyl-L-homocysteine + H(+). Its pathway is lipid metabolism; mycolic acid biosynthesis. Its function is as follows. Catalyzes the conversion of a double bond to a cyclopropane ring at the distal position of an alpha mycolic acid via the transfer of a methylene group from S-adenosyl-L-methionine. Cyclopropanated mycolic acids are key factors participating in cell envelope permeability, host immunomodulation and persistence. This Mycobacterium tuberculosis (strain ATCC 25177 / H37Ra) protein is Cyclopropane mycolic acid synthase 1 (cmaA1).